Consider the following 150-residue polypeptide: Transcriptional regulator MraZ (150 aa).

SpoVT-AbrB domains lie at 9–54 (QSIH…PPEE) and 83–126 (AEEC…NKST).

The protein belongs to the MraZ family. In terms of assembly, forms oligomers.

Its subcellular location is the cytoplasm. The protein localises to the nucleoid. This chain is Transcriptional regulator MraZ, found in Syntrophobacter fumaroxidans (strain DSM 10017 / MPOB).